We begin with the raw amino-acid sequence, 268 residues long: Malonyl-[acyl-carrier protein] O-methyltransferase (268 aa).

Belongs to the methyltransferase superfamily.

It carries out the reaction malonyl-[ACP] + S-adenosyl-L-methionine = malonyl-[ACP] methyl ester + S-adenosyl-L-homocysteine. It functions in the pathway cofactor biosynthesis; biotin biosynthesis. Converts the free carboxyl group of a malonyl-thioester to its methyl ester by transfer of a methyl group from S-adenosyl-L-methionine (SAM). It allows to synthesize pimeloyl-ACP via the fatty acid synthetic pathway. This chain is Malonyl-[acyl-carrier protein] O-methyltransferase, found in Prosthecochloris aestuarii (strain DSM 271 / SK 413).